We begin with the raw amino-acid sequence, 380 residues long: Cytochrome b (380 aa).

The next 4 membrane-spanning stretches (helical) occupy residues 28–48 (IGSL…FLSL), 72–93 (WLVR…YAHI), 109–129 (WLVG…GYVL), and 174–194 (FYSF…VHLL). Heme b contacts are provided by His-78 and His-92. Heme b-binding residues include His-178 and His-192. Position 197 (His-197) interacts with a ubiquinone. Helical transmembrane passes span 222–243 (WKIL…CYIT), 285–305 (IGGV…PLAL), 317–337 (IGQL…WLGA), and 344–364 (YISL…LYMI).

It belongs to the cytochrome b family. As to quaternary structure, the main subunits of complex b-c1 are: cytochrome b, cytochrome c1 and the Rieske protein. Heme b serves as cofactor.

Its subcellular location is the mitochondrion inner membrane. In terms of biological role, component of the ubiquinol-cytochrome c reductase complex (complex III or cytochrome b-c1 complex) that is part of the mitochondrial respiratory chain. The b-c1 complex mediates electron transfer from ubiquinol to cytochrome c. Contributes to the generation of a proton gradient across the mitochondrial membrane that is then used for ATP synthesis. The polypeptide is Cytochrome b (MT-CYB) (Cepaea nemoralis (Banded wood snail)).